A 352-amino-acid chain; its full sequence is uncharacterized protein (352 aa).

Residues 285–352 (FQHLRNARER…IKSEIRRLQR (68 aa)) are a coiled coil.

This is an uncharacterized protein from Emericella nidulans (strain FGSC A4 / ATCC 38163 / CBS 112.46 / NRRL 194 / M139) (Aspergillus nidulans).